Reading from the N-terminus, the 396-residue chain is MSIATTFGTANTSGTIKAMLLGCGELGKEVAIELQRYGIEVIGVDRYPNAPAMQIAHRFHVINMLDAKALKAVIELEKPDLVIPEIEAIATQTLVELEQQGLHVVPTANAAKLTMDREGIRRLAAETLAIPTSKYFFCDTLAEFEQAVTDIGIPCVVKPVMSSSGKGQSVIKSTQTIQQAWAYAQEGGRAGKGRVIVEAFIPFDYEITLLTISAVNGIHFCDPIGHRQEDGDYRESWQPQSMSAEVLHKAQAMSQRVVEALGGYGLFGVELFIRGDEVYFSEVSPRPHDTGLVTLISQDLSEFALHVRAILGLPISNIVQHGPSASAVILAEGTSTNIRYQGMAAALAPADTQLRLFGKPDIDGRRRLGVALARDNSVEQAVEKAKTVASHIKVLF.

Residues 25-26 and Glu-85 each bind N(1)-(5-phospho-beta-D-ribosyl)glycinamide; that span reads EL. Residues Arg-117, Lys-158, 163–168, 198–201, and Glu-206 each bind ATP; these read SSGKGQ and EAFI. Positions 122–311 constitute an ATP-grasp domain; it reads RLAAETLAIP…EFALHVRAIL (190 aa). Mg(2+) is bound by residues Glu-270 and Glu-282. N(1)-(5-phospho-beta-D-ribosyl)glycinamide is bound by residues Asp-289, Lys-359, and 366–367; that span reads RR.

The protein belongs to the PurK/PurT family. As to quaternary structure, homodimer.

The catalysed reaction is N(1)-(5-phospho-beta-D-ribosyl)glycinamide + formate + ATP = N(2)-formyl-N(1)-(5-phospho-beta-D-ribosyl)glycinamide + ADP + phosphate + H(+). It functions in the pathway purine metabolism; IMP biosynthesis via de novo pathway; N(2)-formyl-N(1)-(5-phospho-D-ribosyl)glycinamide from N(1)-(5-phospho-D-ribosyl)glycinamide (formate route): step 1/1. Functionally, involved in the de novo purine biosynthesis. Catalyzes the transfer of formate to 5-phospho-ribosyl-glycinamide (GAR), producing 5-phospho-ribosyl-N-formylglycinamide (FGAR). Formate is provided by PurU via hydrolysis of 10-formyl-tetrahydrofolate. This is Formate-dependent phosphoribosylglycinamide formyltransferase from Shewanella frigidimarina (strain NCIMB 400).